The chain runs to 469 residues: Probable lysophospholipase BODYGUARD 1 (469 aa).

Positions 1–45 are cleaved as a signal peptide; it reads MGFSRSLNRTVGVFVFFILDIVDFLLCFTYKTLDFFFESEWKPCY. Cys46 is lipidated: N-palmitoyl cysteine. The region spanning 185–439 is the AB hydrolase-1 domain; that stretch reads VVFIHGFLSS…IHVVPDKDHI (255 aa). The active site involves His189. Ser263 (nucleophile) is an active-site residue. Catalysis depends on charge relay system residues Asp410 and His438.

As to expression, expressed exclusively in protodermal and epidermal cells of all organs, especially on adaxial sides.

It localises to the cell membrane. The protein localises to the secreted. The protein resides in the cell wall. Controls cuticle development and morphogenesis, by promoting cutin and suberin monomers loading. Involved in the regulation of abscissic acid (ABA) biosynthesis in response to osmotic stress. Plays an important role in osmotic stress and drought resistance. Required to ensure a reduced permeability of aerial tissue, thus preventing transpiration. Regulates lateral root hair development. Its function is as follows. Required for infection by the pathogenic necrotrophic fungus Botrytis cinerea, probably by regulating structural traits of the cuticle. The polypeptide is Probable lysophospholipase BODYGUARD 1 (Arabidopsis thaliana (Mouse-ear cress)).